We begin with the raw amino-acid sequence, 154 residues long: MGLSDGEWQLVLNAWGKVETDVAGHGQEVLIRLFTGHPETLEKFDKFKHLKTEAEMKASEDLKKHGNTVLTALGGILKKKGHHEAEVKHLAESHANKHKIPVKYLEFISDAIIHVLHDKHPSDFGADAQAAMSKALELFRNEMAAQYKVLGFHG.

Residues 2–148 form the Globin domain; the sequence is GLSDGEWQLV…FRNEMAAQYK (147 aa). Serine 4 is subject to Phosphoserine. Histidine 65 contributes to the nitrite binding site. Histidine 65 provides a ligand contact to O2. Residue threonine 68 is modified to Phosphothreonine. Histidine 94 provides a ligand contact to heme b.

As to quaternary structure, monomeric.

Its subcellular location is the cytoplasm. It localises to the sarcoplasm. The enzyme catalyses Fe(III)-heme b-[protein] + nitric oxide + H2O = Fe(II)-heme b-[protein] + nitrite + 2 H(+). The catalysed reaction is H2O2 + AH2 = A + 2 H2O. Functionally, monomeric heme protein which primary function is to store oxygen and facilitate its diffusion within muscle tissues. Reversibly binds oxygen through a pentacoordinated heme iron and enables its timely and efficient release as needed during periods of heightened demand. Depending on the oxidative conditions of tissues and cells, and in addition to its ability to bind oxygen, it also has a nitrite reductase activity whereby it regulates the production of bioactive nitric oxide. Under stress conditions, like hypoxia and anoxia, it also protects cells against reactive oxygen species thanks to its pseudoperoxidase activity. This Bubalus bubalis (Domestic water buffalo) protein is Myoglobin.